A 477-amino-acid chain; its full sequence is MTTQLQHARGGTVTDAMERVAERENRDAEFVRQQVADGQAVIPANHGHDALDPMIIGREFATKVNANIGNSEPASGPEAELQKLHTAVHYGADTVMDLSTGGDLDTIRTENIAYSPVPVGTVPIYEAVTRVDDASDLTPELLLDVVEKQAEQGVDYMTLHAGVLAEHLPLTDGRTTGIVSRGGSILARWMEEHGEQNPLYERFDDLCEILAAYDVTVSLGDGLRPGSLADASDAAQFAELDTLGELTRRAWDHGVQVMVEGPGHVPMDEIADNVERQQDVCDGAPFYVLGPLVTDVAPGYDHITSAIGATEAARAGAAMLCYVTPKEHLGLPDAEDVRDGLAAYRIAAHSADVANGRPGARDWDDAVSEARYAFDWRRQFELALDPGRARNYHDQTLPEDNYKEARFCSMCGVEFCSMRIDQDAREAGDGMDGLESRTDLDSSAAAAVNRPPTGVHRAEKLDDIPCPVAEDDVAADD.

Substrate contacts are provided by residues Asn67, Met96, Tyr125, His160, 180–182 (SRG), 221–224 (DGLR), and Glu260. His264 serves as a coordination point for Zn(2+). A substrate-binding site is contributed by Tyr287. Zn(2+) is bound at residue His328. The [4Fe-4S] cluster site is built by Cys408, Cys411, and Cys416. The segment covering 427-440 (AGDGMDGLESRTDL) has biased composition (basic and acidic residues). Residues 427-477 (AGDGMDGLESRTDLDSSAAAAVNRPPTGVHRAEKLDDIPCPVAEDDVAADD) form a disordered region.

Belongs to the ThiC family. Requires [4Fe-4S] cluster as cofactor.

It catalyses the reaction 5-amino-1-(5-phospho-beta-D-ribosyl)imidazole + S-adenosyl-L-methionine = 4-amino-2-methyl-5-(phosphooxymethyl)pyrimidine + CO + 5'-deoxyadenosine + formate + L-methionine + 3 H(+). Its pathway is cofactor biosynthesis; thiamine diphosphate biosynthesis. In terms of biological role, catalyzes the synthesis of the hydroxymethylpyrimidine phosphate (HMP-P) moiety of thiamine from aminoimidazole ribotide (AIR) in a radical S-adenosyl-L-methionine (SAM)-dependent reaction. The chain is Phosphomethylpyrimidine synthase from Natronomonas pharaonis (strain ATCC 35678 / DSM 2160 / CIP 103997 / JCM 8858 / NBRC 14720 / NCIMB 2260 / Gabara) (Halobacterium pharaonis).